The sequence spans 151 residues: Large ribosomal subunit protein uL15 (151 aa).

A disordered region spans residues 1–57 (MTLRLDSLKANKGARRRKLRKGRGIAAGQGASCGFGMRGQKSRSGRPTRPGFEGGQM). Over residues 12 to 23 (KGARRRKLRKGR) the composition is skewed to basic residues. Residues 25-37 (IAAGQGASCGFGM) show a composition bias toward gly residues.

This sequence belongs to the universal ribosomal protein uL15 family. In terms of assembly, part of the 50S ribosomal subunit.

In terms of biological role, binds to the 23S rRNA. The protein is Large ribosomal subunit protein uL15 of Synechococcus sp. (strain CC9902).